The primary structure comprises 662 residues: uncharacterized protein (662 aa).

Helical transmembrane passes span 10 to 30, 46 to 66, 68 to 88, 101 to 121, 167 to 187, 193 to 213, 217 to 237, 263 to 283, 285 to 305, 312 to 332, 342 to 362, 373 to 393, 394 to 414, 432 to 452, 460 to 480, and 485 to 505; these read SSIVSSALVSSAIGYAIGWPV, PVIGLGIFGAVAVSIFHFLPI, AINLMLIVLGLSAVAFWLSKG, GFCWFTVAFLLCLLPAFEIIP, LIYYYVWHFIAACSSVITGAT, IALTGMTALFSTFVVTWLAVA, SAYAAWWSLPLLFVGSLKPAV, PWVPQHVFSGTLALIAIMAYL, ILYSNAGRNMALAVFMGAILA, MWAGSLSLLLILPLVGALSVS, EVLISLSVTVVITLLCAAVLI, KVVEFWVFPIFAGDYWFLDIP, GFWLVLVFLEFGIIYLSFLIW, ALTVSVLAPLFCTQILHSVIM, VLIPSMLVMTALTSGLFSTTI, and LVGRLTTITAIILLAPSILVG.

It is found in the cell membrane. This is an uncharacterized protein from Sinorhizobium fredii (strain NBRC 101917 / NGR234).